The chain runs to 526 residues: Probable Xaa-Pro aminopeptidase MGG_05684 (526 aa).

Aspartate 285, aspartate 296, glutamate 447, and glutamate 488 together coordinate Mn(2+).

This sequence belongs to the peptidase M24B family. Requires Mn(2+) as cofactor.

The enzyme catalyses Release of any N-terminal amino acid, including proline, that is linked to proline, even from a dipeptide or tripeptide.. In terms of biological role, catalyzes the removal of a penultimate prolyl residue from the N-termini of peptides. This chain is Probable Xaa-Pro aminopeptidase MGG_05684, found in Pyricularia oryzae (strain 70-15 / ATCC MYA-4617 / FGSC 8958) (Rice blast fungus).